A 386-amino-acid chain; its full sequence is MSIRDTLKGGKGEVIKDPRVFIDPLTVFKDIPFREDILKEVAVAVRYFVKSDVKFSTLFLGLTGTGKTFVARYMLNEIEEVKQEDSDYSKVKQAYVNCREVGGTPQAVLSALTERLTTDEVPKHGINLGEYIEKIKEELNGKKALVYLDEVDTLIKRRGGDIVLYQLLRADADISVIMISNDINIRDYMEPRVLSSLGPTVFFKPYDAEQLKHILSIYAEYGLYRGTYDDNILSYIAAISAKEHGDARKAVNLLFRAAQLASGEGFIRKDHVDRAIIEYEQERLIEAIKALPFHYKLALMATMDAEDVVTAHKIYSDLCNQYKQKPLSYRRFSDIISELDMFGIIKVKIINKGRAGGIRKYIEITDKDKIRKALEDTMNLGFEEQW.

ATP contacts are provided by residues 65-69 and Tyr206; that span reads TGKTF.

Belongs to the CDC6/cdc18 family.

Functionally, involved in regulation of DNA replication. The protein is ORC1-type DNA replication protein 3 (cdc6-3) of Sulfurisphaera tokodaii (strain DSM 16993 / JCM 10545 / NBRC 100140 / 7) (Sulfolobus tokodaii).